We begin with the raw amino-acid sequence, 126 residues long: MAIVGLGTDIAEIERVEKALARSGVAFAERILSVQEMETFVSLKQQGRFLAKRFAAKEAASKALGTGIAHGVSFQDFTIKNDDNGKPYLQLAGRAAELAHQMGVCHTHLSLSDERHYAVATVIFES.

Asp-9 and Glu-58 together coordinate Mg(2+).

This sequence belongs to the P-Pant transferase superfamily. AcpS family. Mg(2+) serves as cofactor.

The protein resides in the cytoplasm. It catalyses the reaction apo-[ACP] + CoA = holo-[ACP] + adenosine 3',5'-bisphosphate + H(+). Functionally, transfers the 4'-phosphopantetheine moiety from coenzyme A to a Ser of acyl-carrier-protein. The protein is Holo-[acyl-carrier-protein] synthase of Vibrio vulnificus (strain YJ016).